The primary structure comprises 335 residues: Glycerol-3-phosphate dehydrogenase [NAD(P)+] (335 aa).

3 residues coordinate NADPH: Phe11, Arg31, and Lys107. Lys107 and Gly135 together coordinate sn-glycerol 3-phosphate. Residue Ala139 participates in NADPH binding. Residues Lys190, Asp245, Ser255, Arg256, and Asn257 each coordinate sn-glycerol 3-phosphate. Lys190 serves as the catalytic Proton acceptor. NADPH is bound at residue Arg256. Positions 280 and 282 each coordinate NADPH.

It belongs to the NAD-dependent glycerol-3-phosphate dehydrogenase family.

The protein localises to the cytoplasm. It catalyses the reaction sn-glycerol 3-phosphate + NAD(+) = dihydroxyacetone phosphate + NADH + H(+). The catalysed reaction is sn-glycerol 3-phosphate + NADP(+) = dihydroxyacetone phosphate + NADPH + H(+). Its pathway is membrane lipid metabolism; glycerophospholipid metabolism. In terms of biological role, catalyzes the reduction of the glycolytic intermediate dihydroxyacetone phosphate (DHAP) to sn-glycerol 3-phosphate (G3P), the key precursor for phospholipid synthesis. The protein is Glycerol-3-phosphate dehydrogenase [NAD(P)+] of Anaplasma marginale (strain St. Maries).